We begin with the raw amino-acid sequence, 468 residues long: Hexokinase (468 aa).

In terms of domain architecture, Hexokinase spans 10-466 (AKQLAELEVV…SGKGAALIAD (457 aa)). A hexokinase small subdomain region spans residues 74 to 225 (TGAEVGEAYA…NVPAVCKAIV (152 aa)). ATP is bound at residue 85 to 90 (DFGGST). Positions 163 to 189 (PVGFTFSFPCAQAALNSSFLIEWTKGF) are glucose-binding. The tract at residues 226 to 455 (NDTVGTLVSC…KNIHYCIADD (230 aa)) is hexokinase large subdomain.

It belongs to the hexokinase family.

The enzyme catalyses a D-hexose + ATP = a D-hexose 6-phosphate + ADP + H(+). The catalysed reaction is D-mannose + ATP = D-mannose 6-phosphate + ADP + H(+). It carries out the reaction D-fructose + ATP = D-fructose 6-phosphate + ADP + H(+). It catalyses the reaction D-glucose + ATP = D-glucose 6-phosphate + ADP + H(+). It functions in the pathway carbohydrate metabolism; hexose metabolism. The protein operates within carbohydrate degradation; glycolysis; D-glyceraldehyde 3-phosphate and glycerone phosphate from D-glucose: step 1/4. Its function is as follows. Catalyzes the phosphorylation of various hexoses to hexose 6-phosphate. This is Hexokinase (HXK) from Toxoplasma gondii.